The primary structure comprises 585 residues: FAD-linked oxidoreductase apf9 (585 aa).

Positions 1 to 19 (MKPHTVSLVLSNLASLAAA) are cleaved as a signal peptide. 3 N-linked (GlcNAc...) asparagine glycosylation sites follow: Asn-40, Asn-92, and Asn-117. The 187-residue stretch at 108–294 (IGNSPVYVVN…TEITVKTYPT (187 aa)) folds into the FAD-binding PCMH-type domain. Position 145 is a pros-8alpha-FAD histidine (His-145). 3 N-linked (GlcNAc...) asparagine glycosylation sites follow: Asn-352, Asn-412, and Asn-495.

This sequence belongs to the oxygen-dependent FAD-linked oxidoreductase family. FAD is required as a cofactor.

Its pathway is secondary metabolite biosynthesis. In terms of biological role, FAD-linked oxidoreductase; part of the gene cluster that mediates the biosynthesis of the cyclic tetrapeptide apicidin F (APF). The non-ribosomal peptide synthetase apf1 incorporates four different amino acids to produce apicidin F: L-phenylalanine, D-pipecolic acid (D-pip), N-methoxy-L-tryptophan and L-2-aminooctanedioic acid. L-Phenylalanine is the only proteinogenic amino acid directly used by apf1. The 3 other apf1 substrates are non-proteinogenic and have to be modified by other enzymes of the cluster. Lysine is converted to delta-1-pyrroline-5-carboxylate (P5C) which is reduced to L-pipecolic acid (L-pip) by apf3. L-pip is epimerized to D-pip, probably by apf1 activity, prior to incorporation. L-Tryptophan is N-oxidyzed by one of the cytochrome P450 monooxygenases (apf7 or apf8), and further methylated at the hydroxy group by the O-methyltransferase apf6 to yield N-methoxy-L-tryptophan. The synthesis of the fourth apf1 substrate is more complex. The fatty acid synthase apf5 is involved in the synthesis of the octanoic acid backbone of L-2-aminooctanedioic acid by fixing one acetyl-CoA unit and three malonyl-CoA units. Then one of the cytochrome P450 monooxygenases (apf7 or apf8) may oxidize this backbone to 2-oxooctanoic acid. The aminotransferase apf4 is predicted to catalyze the exchange of the keto group with an amino group. The next step would be the oxidation of 2-aminooctanoic acid by one of the cytochrome P450 monooxygenases (apf7 or apf8). The last step is the oxidation of 2-amino-8-hydroxyoctanoic acid to 2-aminooctanedioic acid is catalyzed by the FAD-dependent monooxygenase apf9. This is FAD-linked oxidoreductase apf9 from Gibberella fujikuroi (strain CBS 195.34 / IMI 58289 / NRRL A-6831) (Bakanae and foot rot disease fungus).